We begin with the raw amino-acid sequence, 148 residues long: Large ribosomal subunit protein uL15 (148 aa).

A disordered region spans residues 1–57 (MRLHDLYPFPEERKTRKRVGRGSGSGLGCTSGKGNKGQNARAGGGVRPGFEGGQMPL). 2 stretches are compositionally biased toward gly residues: residues 21–35 (RGSG…GKGN) and 42–52 (AGGGVRPGFEG).

The protein belongs to the universal ribosomal protein uL15 family. In terms of assembly, part of the 50S ribosomal subunit.

Functionally, binds to the 23S rRNA. This is Large ribosomal subunit protein uL15 from Nitratidesulfovibrio vulgaris (strain ATCC 29579 / DSM 644 / CCUG 34227 / NCIMB 8303 / VKM B-1760 / Hildenborough) (Desulfovibrio vulgaris).